A 123-amino-acid polypeptide reads, in one-letter code: Small ribosomal subunit protein uS12 (123 aa).

Asp-89 is modified (3-methylthioaspartic acid).

It belongs to the universal ribosomal protein uS12 family. As to quaternary structure, part of the 30S ribosomal subunit. Contacts proteins S8 and S17. May interact with IF1 in the 30S initiation complex.

In terms of biological role, with S4 and S5 plays an important role in translational accuracy. Interacts with and stabilizes bases of the 16S rRNA that are involved in tRNA selection in the A site and with the mRNA backbone. Located at the interface of the 30S and 50S subunits, it traverses the body of the 30S subunit contacting proteins on the other side and probably holding the rRNA structure together. The combined cluster of proteins S8, S12 and S17 appears to hold together the shoulder and platform of the 30S subunit. The protein is Small ribosomal subunit protein uS12 of Granulibacter bethesdensis (strain ATCC BAA-1260 / CGDNIH1).